We begin with the raw amino-acid sequence, 589 residues long: Oligo-1,6-glucosidase IMA2 (589 aa).

Asp-215 serves as the catalytic Nucleophile. The Proton donor role is filled by Glu-277.

Belongs to the glycosyl hydrolase 13 family.

It carries out the reaction Hydrolysis of (1-&gt;6)-alpha-D-glucosidic linkages in some oligosaccharides produced from starch and glycogen by alpha-amylase, and in isomaltose.. Alpha-glucosidase with specificity for isomaltase, methyl-alpha-glucoside, and palatinose. In Saccharomyces cerevisiae (strain ATCC 204508 / S288c) (Baker's yeast), this protein is Oligo-1,6-glucosidase IMA2 (IMA2).